A 47-amino-acid polypeptide reads, in one-letter code: Photosystem II reaction center protein K (47 aa).

Positions M1–A10 are excised as a propeptide. A helical membrane pass occupies residues F19–V39.

It belongs to the PsbK family. As to quaternary structure, PSII is composed of 1 copy each of membrane proteins PsbA, PsbB, PsbC, PsbD, PsbE, PsbF, PsbH, PsbI, PsbJ, PsbK, PsbL, PsbM, PsbT, PsbX, PsbY, PsbZ, Psb30/Ycf12, peripheral proteins PsbO, CyanoQ (PsbQ), PsbU, PsbV and a large number of cofactors. It forms dimeric complexes.

The protein resides in the cellular thylakoid membrane. In terms of biological role, one of the components of the core complex of photosystem II (PSII). PSII is a light-driven water:plastoquinone oxidoreductase that uses light energy to abstract electrons from H(2)O, generating O(2) and a proton gradient subsequently used for ATP formation. It consists of a core antenna complex that captures photons, and an electron transfer chain that converts photonic excitation into a charge separation. This chain is Photosystem II reaction center protein K, found in Parasynechococcus marenigrum (strain WH8102).